Consider the following 78-residue polypeptide: Large ribosomal subunit protein bL28 (78 aa).

The protein belongs to the bacterial ribosomal protein bL28 family.

This chain is Large ribosomal subunit protein bL28, found in Francisella tularensis subsp. holarctica (strain FTNF002-00 / FTA).